We begin with the raw amino-acid sequence, 530 residues long: Glucose-6-phosphate 1-dehydrogenase (530 aa).

NADP(+) contacts are provided by residues 53-60 (GASGDLAK), Arg87, Tyr162, and Lys186. D-glucose 6-phosphate-binding positions include Lys186, 216–220 (HYLGK), Glu254, and Asp273. His278 acts as the Proton acceptor in catalysis. Arg372 contacts NADP(+). Lys375 and Arg380 together coordinate D-glucose 6-phosphate. NADP(+)-binding residues include Lys381, Arg385, and Arg408. Gln410 contributes to the D-glucose 6-phosphate binding site. NADP(+)-binding positions include 416–418 (YAK), 436–438 (DLT), Arg502, Tyr518, and Trp524.

It belongs to the glucose-6-phosphate dehydrogenase family.

It is found in the cytoplasm. The protein resides in the cytosol. The catalysed reaction is D-glucose 6-phosphate + NADP(+) = 6-phospho-D-glucono-1,5-lactone + NADPH + H(+). The protein operates within carbohydrate degradation; pentose phosphate pathway; D-ribulose 5-phosphate from D-glucose 6-phosphate (oxidative stage): step 1/3. Its function is as follows. Cytosolic glucose-6-phosphate dehydrogenase that catalyzes the first and rate-limiting step of the oxidative branch within the pentose phosphate pathway/shunt, an alternative route to glycolysis for the dissimilation of carbohydrates and a major source of reducing power and metabolic intermediates for fatty acid and nucleic acid biosynthetic processes. In Takifugu rubripes (Japanese pufferfish), this protein is Glucose-6-phosphate 1-dehydrogenase (g6pd).